We begin with the raw amino-acid sequence, 1079 residues long: MSEKQTGSANGGLGKTLAQLEQVVSASLRPLPSQTGDGTYVTEQVKTGILKDLSHVDLGDLKTLVDVSKSALTGEALDDRKYIMERVIQLSAGLPSTSQIGKELTNTFLTTLWNDLEHPPISYLGRDAMYRRADGSGNNVLWPHIGAAGTPYARSVQPKTVQSPNLPDPETLFDCLLARKEYKEHPNKISSVLFYIASIIIHDLFETDRKDPAISLTSSYLDLSPLYGNNQQEQDLIRTFKDGKLKPDCFSTKRVLGFPPGVGVVLIMFNRFHNYVVEKLAMINEGGRFTKPQESDTAAYAKYDNDLFQTGRLVTCGLYVNIILKDYVRTILNINRTDSIWSLDPRSEMKDGLLGRAAAQATGNQVAAEFNLVYRWHSCISQRDQKWTEDMYQELFPGQDPSKISLQDFLRGLGRWEAKLPGEPRERPFAGLQRKADGSYDDNDLVKIFEESVEDCAGAFGALHVPTVFRSIEALGIQQARSWNLATLNEFRKYFNLAPYKTFEEINSDPYVADQLKRLYDHPDRVEIYPGIIVEDAKESMAPGSGLCTNFTISRAILSDAVALVRGDRFHTVDFTPKHLTNWAYNEIQPQDSVDQTHVFYKLVLRAFPNHFRGDSIYAHFPLVVPSENKKILTKLGTADKYSWDRPNYTPPPQFINSHSACMSILSDQETFKVTWGSKIEFLMRHNNQPYGRDFMLSGDRTPNAMSRQMMGKALYRDKWETEVKRFYENITLKLLHRYSYKLAGVNQVDVVRDIANLAQVHFCASVFSLPLKTESNPRGIFTESELYQIMAVVFTSIFYDADIGKSFELNQAARAVTQQLGQLTLANVELIAKTGFIANLVNSLHRHDVLSEYGVHMIQRLLDSGMPAPEIVWTHVLPTAGGMVANQAQLFSQSLDYYLSEEGSVHLPEINRLAKEDTTEADDLLLRYFMEGARIRSSVALPRVVAQPTVVEDNGQKITLKQGQHIICNLVSASMDPVTFPEPDKVKLDRDMNLYAHFGFGPHQCLGLGLCKTALTTMLKVIGRLDNLRRAPGGQGKLKKLSGPGGIAMYMTPDQTAFFPFPTTMKIQWDGDLPEVKE.

The segment at 105 to 446 (TNTFLTTLWN…DGSYDDNDLV (342 aa)) is linoleate 8R-lipoxygenase. Histidine 202 serves as a coordination point for heme b. Tyrosine 374 is a catalytic residue. Position 377 (histidine 377) interacts with heme b. The tract at residues 654–1079 (QFINSHSACM…WDGDLPEVKE (426 aa)) is 9,12-octadecadienoate 8-hydroperoxide 8R-isomerase.

Belongs to the peroxidase family. Homotetramer. Heme b is required as a cofactor.

The enzyme catalyses (9Z,12Z)-octadecadienoate + O2 = (8R,9Z,12Z)-8-hydroperoxyoctadeca-9,12-dienoate. The catalysed reaction is (8R,9Z,12Z)-8-hydroperoxyoctadeca-9,12-dienoate = (5S,8R,9Z,12Z)-5,8-dihydroxyoctadeca-9,12-dienoate. Its function is as follows. Bifunctional heme-containing enzyme that oxidizes linoleic acid to (8R,9Z,12Z)-8-hydroperoxyoctadeca-9,12-dienoate (within the N-terminal heme peroxidase domain), which is subsequently isomerized to (5S,8R,9Z,12Z)-5,8-dihydroxyoctadeca-9,12-dienoate (within the C-terminal P450 heme thiolate domain). Oxidized unsaturated fatty acids, so-called oxylipins, derived from endogenous fatty acids, influence the development of the asexual conidiophores and sexual cleistothecia and regulate the secondary metabolism. These substances were collectively named psi factors and are primarily a mixture of hydroxylated oleic, linoleic and alpha-linolenic acids. They are termed psi-beta, psi-alpha, and psi-gamma, respectively. Oxylipins may also serve as activators of mammalian immune responses contributing to enhanced resistance to opportunistic fungi and as factors that modulate fungal development contributing to resistance to host defenses. The sequence is that of Psi-producing oxygenase A (ppoA) from Aspergillus fumigatus (strain CBS 144.89 / FGSC A1163 / CEA10) (Neosartorya fumigata).